A 613-amino-acid chain; its full sequence is Ribosome-associated molecular chaperone SSB (613 aa).

A nucleotide binding domain (NBD) region spans residues 1-391; that stretch reads MADGVFQGAI…ILTGQSTSDE (391 aa). ATP contacts are provided by residues 16–18, lysine 73, 205–207, 271–278, and glycine 342; these read TTY, GGT, and ERAKRTLS. The tract at residues 392 to 402 is inter-domain linker; it reads TKDLLLLDVAP. The substrate binding domain (SBD) stretch occupies residues 403–613; the sequence is LSLGVGMQGD…RVVTKAMSSR (211 aa). Positions 516–612 are lid domain (SBDalpha); sequence SEDIEKMVNQ…KRVVTKAMSS (97 aa). The Nuclear export signal signature appears at 574-582; the sequence is IEAALADAL.

Belongs to the heat shock protein 70 family. Ssb-type Hsp70 subfamily. Binds to ribosomes. Binds close to the ribosomal tunnel exit via contacts with both ribosomal proteins and rRNA. Directly interacts with nascent polypeptides. This interaction is dependent on the ribosome-associated complex (RAC). Interacts with SSE1. Interacts with FES1.

The protein resides in the cytoplasm. The catalysed reaction is ATP + H2O = ADP + phosphate + H(+). In terms of biological role, ribosome-bound, Hsp70-type chaperone that assists in the cotranslational folding of newly synthesized proteins in the cytosol. Stimulates folding by interacting with nascent chains, binding to short, largely hydrophobic sequences exposed by unfolded proteins, thereby stabilizing longer, more slowly translated, and aggregation-prone nascent polypeptides and domains that cannot fold stably until fully synthesized. The Hsp70-protein substrate interaction depends on ATP-binding and on allosteric regulation between the NBD and the SBD. The ATP-bound state is characterized by a fast exchange rate of substrate (low affinity state), while in the ADP-bound state exchange is much slower (high affinity state). During the Hsp70 cycle, the chaperone switches between the ATP-bound state (open conformation) and the ADP-bound state (closed conformation) by major conformational rearrangements involving mainly the lid domain. Ssb cooperates with a specific Hsp40/Hsp70 co-chaperone termed the ribosome-associated complex (RAC), which stimulates the ATPase activity of the ribosome-associated pool of Ssbs and switches it to the high affinity substrate binding state. Hsp110 chaperone SSE1 and FES1 act as nucleotide exchange factors that cause substrate release. The polypeptide is Ribosome-associated molecular chaperone SSB (SSB1) (Candida glabrata (strain ATCC 2001 / BCRC 20586 / JCM 3761 / NBRC 0622 / NRRL Y-65 / CBS 138) (Yeast)).